A 302-amino-acid chain; its full sequence is Nucleotide-binding protein RHOS4_02640 (302 aa).

An ATP-binding site is contributed by 15–22; sequence GPSGAGRT. 62 to 65 lines the GTP pocket; that stretch reads DVRN.

It belongs to the RapZ-like family.

Functionally, displays ATPase and GTPase activities. The polypeptide is Nucleotide-binding protein RHOS4_02640 (Cereibacter sphaeroides (strain ATCC 17023 / DSM 158 / JCM 6121 / CCUG 31486 / LMG 2827 / NBRC 12203 / NCIMB 8253 / ATH 2.4.1.) (Rhodobacter sphaeroides)).